The primary structure comprises 149 residues: MKYQQLENLECGWKWQYLINKWKDGEPVTRYIDKSEIEAAVQKLRAIEHEPTHVLSWIEEHMSSELDNKLKQAIRAKRKRHFNAEQIHTRKKSIDLDYRVWEKLSLKANELGCTLSDAIEYLLSEASRSEKASKTVNSLKEDLSRLLAE.

The protein belongs to the MatP family. Homodimer.

Its subcellular location is the cytoplasm. Functionally, required for spatial organization of the terminus region of the chromosome (Ter macrodomain) during the cell cycle. Prevents early segregation of duplicated Ter macrodomains during cell division. Binds specifically to matS, which is a 13 bp signature motif repeated within the Ter macrodomain. This chain is Macrodomain Ter protein, found in Vibrio cholerae serotype O1 (strain ATCC 39315 / El Tor Inaba N16961).